Reading from the N-terminus, the 578-residue chain is Thrombomodulin (578 aa).

The signal sequence occupies residues 1 to 16 (MLRVLLLGVLAPAGLG). Over 17-518 (LPTPAQPQPR…SPSPVGPVHS (502 aa)) the chain is Extracellular. The C-type lectin domain occupies 31–167 (MEHDCFQLFR…CAAEADGFLC (137 aa)). Asparagine 114 carries N-linked (GlcNAc...) asparagine glycosylation. 19 disulfide bridges follow: cysteine 137–cysteine 158, cysteine 246–cysteine 257, cysteine 253–cysteine 266, cysteine 268–cysteine 281, cysteine 289–cysteine 297, cysteine 293–cysteine 309, cysteine 311–cysteine 324, cysteine 330–cysteine 341, cysteine 337–cysteine 350, cysteine 352–cysteine 363, cysteine 370–cysteine 379, cysteine 375–cysteine 389, cysteine 391–cysteine 405, cysteine 409–cysteine 414, cysteine 418–cysteine 426, cysteine 428–cysteine 440, cysteine 446–cysteine 455, cysteine 451–cysteine 464, and cysteine 466–cysteine 480. EGF-like domains are found at residues 242–282 (GAWD…RSCA) and 285–325 (AEHS…HRCE). Asparagine 300 is a glycosylation site (N-linked (GlcNAc...) asparagine). An EGF-like 3; calcium-binding domain is found at 326-364 (DVDDCIQVPSLCPQLCVNTRGAFECHCYPGYELVDNECV). A (3R)-3-hydroxyasparagine modification is found at asparagine 343. 2 EGF-like domains span residues 366–406 (PVDP…HRCQ) and 405–441 (CQMFCNQTACPADCDPNSPTSCQCPEGYILDDGFMCT). Asparagine 410 carries an N-linked (GlcNAc...) asparagine glycan. In terms of domain architecture, EGF-like 6; calcium-binding spans 442–481 (DIDECENGECPEACRNLPGTYECICGPDSPLAGQVATDCG). Residues 483-512 (IISDPDGDSDSGSGEPPVTPTPGVTPSPSP) form a disordered region. Residues serine 493 and serine 495 are each glycosylated (O-linked (Xyl...) (chondroitin sulfate) serine). Residues 499-512 (PVTPTPGVTPSPSP) show a composition bias toward pro residues. Residues 519–539 (GVLIGISIASLSLVVALLALL) traverse the membrane as a helical segment. Over 540–578 (CHLRKKQGAPRAELEYKCGAPAKEVVLQHVRTEQMPQKL) the chain is Cytoplasmic.

In terms of assembly, interacts with ITGAL, ITGAM and ITGB2. Interacts with thrombin/F2; this interaction switches the specificity of thrombin from a procoagulant to an anticoagulant and antifibrinolytic protease. Interacts with ANGP1 and ANGP2; these interactions significantly inhibit the generation of activated PC and TAFIa/CPB2 by the thrombin/thrombomodulin complex. Interacts with PF4; this interaction enhances generation of activated protein C. Interacts with HMGB1; this interaction inhibits HMGB1 inflammatory activity. Post-translationally, N-glycosylated. The iron and 2-oxoglutarate dependent 3-hydroxylation of aspartate and asparagine is (R) stereospecific within EGF domains. As to expression, expressed in lung, liver, spleen, kidney, pancreas and lymph node. Low expression in heart, cerebrum, urinary bladder and uterus.

The protein localises to the membrane. Endothelial cell receptor that plays a critical role in regulating several physiological processes including hemostasis, coagulation, fibrinolysis, inflammation, and angiogenesis. Acts as a cofactor for thrombin activation of protein C/PROC on the surface of vascular endothelial cells leading to initiation of the activated protein C anticoagulant pathway. Also accelerates the activation of the plasma carboxypeptidase B2/CPB2, which catalyzes removal of C-terminal basic amino acids from its substrates including kinins or anaphylatoxins leading to fibrinolysis inhibition. Plays critical protective roles in changing the cleavage specificity of protease-activated receptor 1/PAR1, inhibiting endothelial cell permeability and inflammation. Suppresses inflammation distinctly from its anticoagulant cofactor activity by sequestering HMGB1 thereby preventing it from engaging cellular receptors such as RAGE and contributing to the inflammatory response. This is Thrombomodulin (THBD) from Canis lupus familiaris (Dog).